The sequence spans 697 residues: Probable translocation protein y4yR (697 aa).

The next 8 helical transmembrane spans lie at 20 to 40 (VALM…VMAV), 42 to 62 (ALIG…LYVS), 67 to 87 (FSSL…LTVA), 107 to 127 (SFVI…VTMV), 200 to 220 (SIAG…IGLL), 235 to 255 (LLTI…SITA), 293 to 313 (VAMG…AAVF), and 372 to 392 (IARI…PIPV). The disordered stretch occupies residues 675–697 (IRLPPSNGTSGEPRSIRPSATTG). The segment covering 680–697 (SNGTSGEPRSIRPSATTG) has biased composition (polar residues).

It belongs to the FHIPEP (flagella/HR/invasion proteins export pore) family.

It localises to the cell inner membrane. Could be involved in the secretion of an unknown factor. This Sinorhizobium fredii (strain NBRC 101917 / NGR234) protein is Probable translocation protein y4yR.